The sequence spans 428 residues: tRNA(Ile)-lysidine synthase (428 aa).

An ATP-binding site is contributed by 25 to 30 (SGGIDS).

This sequence belongs to the tRNA(Ile)-lysidine synthase family.

The protein resides in the cytoplasm. The enzyme catalyses cytidine(34) in tRNA(Ile2) + L-lysine + ATP = lysidine(34) in tRNA(Ile2) + AMP + diphosphate + H(+). Its function is as follows. Ligates lysine onto the cytidine present at position 34 of the AUA codon-specific tRNA(Ile) that contains the anticodon CAU, in an ATP-dependent manner. Cytidine is converted to lysidine, thus changing the amino acid specificity of the tRNA from methionine to isoleucine. The protein is tRNA(Ile)-lysidine synthase of Haemophilus ducreyi (strain 35000HP / ATCC 700724).